Reading from the N-terminus, the 919-residue chain is UPF0182 protein Tery_4385 (919 aa).

The next 7 helical transmembrane spans lie at 6–26 (YIII…RTLV), 52–72 (IFLW…NYWI), 96–116 (IFVK…AATA), 160–180 (WLFT…ALKG), 198–218 (THIS…FWFE), 243–263 (FAYW…VLSV), and 268–288 (IIWP…FNVL).

The protein belongs to the UPF0182 family.

It is found in the cell membrane. The sequence is that of UPF0182 protein Tery_4385 from Trichodesmium erythraeum (strain IMS101).